The chain runs to 1343 residues: DNA-directed RNA polymerase subunit beta (1343 aa).

Belongs to the RNA polymerase beta chain family. The RNAP catalytic core consists of 2 alpha, 1 beta, 1 beta' and 1 omega subunit. When a sigma factor is associated with the core the holoenzyme is formed, which can initiate transcription.

It carries out the reaction RNA(n) + a ribonucleoside 5'-triphosphate = RNA(n+1) + diphosphate. In terms of biological role, DNA-dependent RNA polymerase catalyzes the transcription of DNA into RNA using the four ribonucleoside triphosphates as substrates. This chain is DNA-directed RNA polymerase subunit beta, found in Buchnera aphidicola subsp. Cinara cedri (strain Cc).